We begin with the raw amino-acid sequence, 333 residues long: Minor fimbrium tip subunit MfA4 (333 aa).

An N-terminal signal peptide occupies residues 1 to 18 (MKKYLLYASLLTSVLLFS). The N-palmitoyl cysteine moiety is linked to residue cysteine 19. Residue cysteine 19 is the site of S-diacylglycerol cysteine attachment. Positions 19-53 (CSKNNPSEPVEDRSIEISIRVDDFTKTGETVRYER) are excised as a propeptide.

It belongs to the bacteroidetes fimbrillin superfamily. FimA/Mfa1 family. In terms of assembly, component of the fimbrium tip. Minor fimbriae are composed of a structural subunit, most often Mfa1, and the accessory subunits Mfa3, Mfa4 and Mfa5. Mfa4 is required for Mfa3 and Mfa5 insertion into the fimbrium. Fimbrium assembly occurs by linear, head-to-tail oligomerization of fimbrial subunits. This is mediated via insertion of a C-terminal beta-strand from one subunit into a groove in the N-terminal domain of the following subunit.

The protein localises to the fimbrium. Its subcellular location is the cell outer membrane. Tip subunit of the minor fimbriae. These filamentous pili are attached to the cell surface; they mediate biofilm formation, adhesion onto host cells and onto other bacteria that are part of the oral microbiome. They play an important role in invasion of periodontal tissues and are recognized as major virulence factors. This chain is Minor fimbrium tip subunit MfA4, found in Porphyromonas gingivalis (strain ATCC 33277 / DSM 20709 / CIP 103683 / JCM 12257 / NCTC 11834 / 2561).